A 327-amino-acid chain; its full sequence is Protoheme IX farnesyltransferase (327 aa).

8 helical membrane passes run 35-55 (LIPL…GWPL), 60-80 (LVCT…LNCL), 106-126 (SAFI…VSGV), 129-149 (LAAG…TALL), 157-177 (IVIG…AATG), 185-205 (WLFA…ALLL), 234-254 (GWIT…GGAF), and 283-303 (AKAL…LLIL).

The protein belongs to the UbiA prenyltransferase family. Protoheme IX farnesyltransferase subfamily.

It localises to the cell inner membrane. It carries out the reaction heme b + (2E,6E)-farnesyl diphosphate + H2O = Fe(II)-heme o + diphosphate. The protein operates within porphyrin-containing compound metabolism; heme O biosynthesis; heme O from protoheme: step 1/1. Its function is as follows. Converts heme B (protoheme IX) to heme O by substitution of the vinyl group on carbon 2 of heme B porphyrin ring with a hydroxyethyl farnesyl side group. The sequence is that of Protoheme IX farnesyltransferase from Synechococcus sp. (strain CC9605).